A 3574-amino-acid chain; its full sequence is Chromatin structure-remodeling complex protein SYD (3574 aa).

Disordered regions lie at residues 76-105, 123-211, and 328-372; these read SCLP…GVSN, TSGR…KIDD, and DPKG…TERS. Polar residues-rich tracts occupy residues 124–148 and 155–168; these read SGRQ…QSNR and PSNL…SQPH. The segment covering 169–181 has biased composition (basic and acidic residues); the sequence is NRSETMNQRDVKS. A compositionally biased stretch (polar residues) spans 194-204; sequence WDQNMDNSQIF. A compositionally biased stretch (basic and acidic residues) spans 358–372; sequence RLDEMDFSSKETERS. In terms of domain architecture, HSA spans 573–647; the sequence is QKMKEERQRR…QREKINLLKI (75 aa). The Helicase ATP-binding domain maps to 766–933; it reads VSLYNNHLNG…WALLNFLLPN (168 aa). Position 779 to 786 (779 to 786) interacts with ATP; that stretch reads DEMGLGKT. The short motif at 884 to 887 is the DEAH box element; the sequence is DEGH. Residues 1077–1223 enclose the Helicase C-terminal domain; sequence MLDRMLPKLK…KLGVANQSIT (147 aa). The short motif at 1266–1273 is the Nuclear localization signal element; it reads ARRESEID. Disordered stretches follow at residues 1342 to 1472, 1500 to 1575, 1588 to 1637, 1690 to 1811, 1830 to 1868, 2040 to 2068, 2089 to 2115, 2143 to 2162, 2179 to 2220, 2235 to 2338, 2350 to 2451, 2517 to 2538, 2684 to 2703, 2718 to 2759, 2865 to 2884, 3017 to 3045, 3189 to 3208, 3316 to 3337, and 3512 to 3574; these read KRKD…VSRT, HPTS…SDAE, IVSR…SGSH, GPVQ…QIEV, QPHF…QTAD, SSLS…LEKN, SSEE…TDEV, SSML…HSSI, LDDK…QMED, EEKE…DTND, EEKE…HMED, FESE…EVSE, SEEI…QPDD, IDIG…RDSR, DTEK…LHQL, EGTD…PSSS, NADS…VVEK, VDDS…AEPM, and TEDT…NEDV. Basic and acidic residues predominate over residues 1362-1371; that stretch reads AREVRSYEEK. Composition is skewed to polar residues over residues 1399-1426 and 1500-1511; these read SLAN…QAIT and HPTSSLALTSPD. Basic residues predominate over residues 1532 to 1546; it reads GRGRGRSRGRGAGRG. 2 stretches are compositionally biased toward polar residues: residues 1555–1571 and 1597–1614; these read GSNS…TSLA and EGST…SATT. A compositionally biased stretch (basic and acidic residues) spans 1617 to 1627; that stretch reads RSDKAADKDLD. Polar residues-rich tracts occupy residues 1690–1699, 1706–1752, 1796–1806, 1832–1849, 2040–2057, and 2090–2110; these read GPVQNQNAVS, KSPS…STVE, DASSARSTGLT, HFSQ…SLSQ, SSLS…STTA, and SEEQ…LQAS. Acidic residues predominate over residues 2248 to 2260; it reads DDADTEQDPEESV. Positions 2438 to 2451 are enriched in basic and acidic residues; sequence DRPKDGTADTHMED. Over residues 2718-2735 the composition is skewed to polar residues; that stretch reads IDIGITSGKTCQPSSSTQ. 2 stretches are compositionally biased toward polar residues: residues 3034-3045 and 3191-3204; these read KSQLADTEPSSS and DSQL…SSPS. Basic and acidic residues predominate over residues 3523 to 3538; sequence KTEEKDAENPSDRLDG.

The protein belongs to the SNF2/RAD54 helicase family. Interacts with LFY. Binds to BARD1/ROW1. In terms of processing, phosphorylated. In terms of tissue distribution, mostly expressed in rapidly dividing cells in the vegetative, inflorescence, and root meristems, as well as in young leaf and flower primordia. Isoform 1 is predominantly found in seedlings whereas isoform 2 is present in both seedlings and inflorescences (at protein level).

Its subcellular location is the cytoplasm. The protein localises to the nucleus. Catalytic component of the chromatin structure-remodeling complex (RSC), which is involved in transcription regulation and nucleosome positioning. Controls stem cell fate via the transcription regulation of WUS in the shoot apical meristem, by modulating its promoter. LFY-dependent repressor of the meristem identity switch from vegetative to reproductive development probably by modulating chromatin state. Involved in the regulation of floral homeotic gene expression in response to environmental stimuli. Required for carpel and ovule development, and for cotyledon separation via the regulation of CUC2 transcription. Regulates the promoters of several genes downstream of the jasmonate (JA) and ethylene (ET) signaling pathways. Required for resistance against the necrotrophic pathogen B.cinerea but not the biotrophic pathogen P.syringae. In Arabidopsis thaliana (Mouse-ear cress), this protein is Chromatin structure-remodeling complex protein SYD (SYD).